Reading from the N-terminus, the 367-residue chain is Peptide chain release factor 1 (367 aa).

An N5-methylglutamine modification is found at glutamine 238.

This sequence belongs to the prokaryotic/mitochondrial release factor family. In terms of processing, methylated by PrmC. Methylation increases the termination efficiency of RF1.

Its subcellular location is the cytoplasm. Peptide chain release factor 1 directs the termination of translation in response to the peptide chain termination codons UAG and UAA. In Dictyoglomus turgidum (strain DSM 6724 / Z-1310), this protein is Peptide chain release factor 1.